A 150-amino-acid polypeptide reads, in one-letter code: Transmembrane protein 35B (150 aa).

Residues 1-21 (MSFRVGVLRVLLGVFFALTGA) form the signal peptide. 3 consecutive transmembrane segments (helical) span residues 62 to 82 (TAVG…PPVL), 84 to 104 (EISN…LVVL), and 111 to 131 (YVPA…HFLA).

Belongs to the DoxX family.

Its subcellular location is the membrane. The polypeptide is Transmembrane protein 35B (Mus musculus (Mouse)).